Reading from the N-terminus, the 515-residue chain is Cytidine and dCMP deaminase domain-containing protein 1 (515 aa).

Polar residues-rich tracts occupy residues 1 to 11 (MKEAGQMQNLE) and 18 to 27 (SVSTQTGSMT). Disordered regions lie at residues 1-27 (MKEA…GSMT) and 56-83 (RQKS…STDK). A compositionally biased stretch (basic and acidic residues) spans 60 to 83 (QKNEEGKHGPLGDNEEMTRVSTDK). The 99-residue stretch at 71 to 169 (GDNEEMTRVS…SLLTEASSSE (99 aa)) folds into the CMP/dCMP-type deaminase 1 domain. Residues histidine 110, cysteine 135, and cysteine 138 each contribute to the Zn(2+) site. Residues 272-284 (NLRQNMKDLILLL) carry the Nuclear export signal motif. In terms of domain architecture, CMP/dCMP-type deaminase 2 spans 318 to 483 (EIARHCMVQA…LNPSGAYGLE (166 aa)). Zn(2+) is bound at residue histidine 399. The Proton donor role is filled by glutamate 401. Cysteine 427 and cysteine 430 together coordinate Zn(2+). Positions 489–511 (RRENGVLRPVPQKEEQHQDKKLC) match the Bipartite nuclear localization signal motif. Positions 494-515 (VLRPVPQKEEQHQDKKLCLGIH) are disordered.

Belongs to the cytidine and deoxycytidylate deaminase family. Zn(2+) serves as cofactor.

Its subcellular location is the cytoplasm. It is found in the nucleus. It carries out the reaction 2'-deoxycytidine + H2O + H(+) = 2'-deoxyuridine + NH4(+). The catalysed reaction is cytidine + H2O + H(+) = uridine + NH4(+). Its function is as follows. Catalyzes the deamination of cytidine and deoxycytidine into uridine and deoxyuridine, respectively. May play an important role in testicular development and spermatogenesis. The polypeptide is Cytidine and dCMP deaminase domain-containing protein 1 (CDADC1) (Pongo abelii (Sumatran orangutan)).